A 162-amino-acid chain; its full sequence is Cyclic pyranopterin monophosphate synthase (162 aa).

Substrate is bound by residues 75–77 (LCH) and 113–114 (ME). Residue Asp128 is part of the active site.

Belongs to the MoaC family. As to quaternary structure, homohexamer; trimer of dimers.

The enzyme catalyses (8S)-3',8-cyclo-7,8-dihydroguanosine 5'-triphosphate = cyclic pyranopterin phosphate + diphosphate. It participates in cofactor biosynthesis; molybdopterin biosynthesis. Its function is as follows. Catalyzes the conversion of (8S)-3',8-cyclo-7,8-dihydroguanosine 5'-triphosphate to cyclic pyranopterin monophosphate (cPMP). This chain is Cyclic pyranopterin monophosphate synthase, found in Xanthobacter autotrophicus (strain ATCC BAA-1158 / Py2).